A 430-amino-acid polypeptide reads, in one-letter code: tRNA(Ile)-lysidine synthase (430 aa).

An ATP-binding site is contributed by 24 to 29 (SGGLDS).

It belongs to the tRNA(Ile)-lysidine synthase family.

It is found in the cytoplasm. The catalysed reaction is cytidine(34) in tRNA(Ile2) + L-lysine + ATP = lysidine(34) in tRNA(Ile2) + AMP + diphosphate + H(+). Functionally, ligates lysine onto the cytidine present at position 34 of the AUA codon-specific tRNA(Ile) that contains the anticodon CAU, in an ATP-dependent manner. Cytidine is converted to lysidine, thus changing the amino acid specificity of the tRNA from methionine to isoleucine. The sequence is that of tRNA(Ile)-lysidine synthase from Haemophilus influenzae (strain ATCC 51907 / DSM 11121 / KW20 / Rd).